Here is a 359-residue protein sequence, read N- to C-terminus: F-box protein At5g49610 (359 aa).

In terms of domain architecture, F-box spans 3 to 52 (NQKGALFPDEVILQILARLPVKSLFRFKSVCKSWYRLPSDKYFTSLFNQL).

In terms of assembly, part of a SCF (SKP1-cullin-F-box) protein ligase complex. Interacts with SKP1A, SKP1B, ASK11, ASK12, ASK13 and ASK14.

The protein operates within protein modification; protein ubiquitination. This Arabidopsis thaliana (Mouse-ear cress) protein is F-box protein At5g49610.